The primary structure comprises 619 residues: ESX-2 secretion system protein EccA2 (619 aa).

ATP is bound at residue 373-380; sequence GPPGTGKT.

The protein belongs to the CbxX/CfxQ family. As to quaternary structure, part of the ESX-2 / type VII secretion system (T7SS), which is composed of cytosolic and membrane components. Residues 522-619 interact with an artificial EsxB-EsxA heterodimer from the adjacent ESX-1 locus.

The protein localises to the cytoplasm. In terms of biological role, shows ATPase activity. Could provide energy for export of ESX-2 substrates. The protein is ESX-2 secretion system protein EccA2 (eccA2) of Mycobacterium tuberculosis (strain ATCC 25618 / H37Rv).